The chain runs to 255 residues: Acetylglutamate kinase (255 aa).

Residues 40 to 41 (GG), Arg62, and Asn153 contribute to the substrate site.

Belongs to the acetylglutamate kinase family. ArgB subfamily.

It is found in the cytoplasm. It catalyses the reaction N-acetyl-L-glutamate + ATP = N-acetyl-L-glutamyl 5-phosphate + ADP. It functions in the pathway amino-acid biosynthesis; L-arginine biosynthesis; N(2)-acetyl-L-ornithine from L-glutamate: step 2/4. Catalyzes the ATP-dependent phosphorylation of N-acetyl-L-glutamate. This Bacillus cereus (strain AH187) protein is Acetylglutamate kinase.